Here is a 436-residue protein sequence, read N- to C-terminus: MARLDKVKGTRDLLPEEMAKRRWVFERIREVFEGFNFQEVLTPTFEYTELFKLRSGEEVVKQLYAFQDKGGRDISLRPDMTSSVARLYVNRFQNAPKPIKWYYIANMFRYEEPQSGRYREFWQAGVELIGSDRVEADAEVIALFTQSYLAVGLEDFTVNIGDRILLDEFAKMLGVEDDIGLMRLIDKKDKMSREEFVGALREFGLNDDGVEKVLSLIEIKGLPDEVLPKAEELFTSEEAKAEIKRLYELVDLLDAYGVSKWVRIDLGIARGFDYYTSVVFEAIAPNDLGIGSIGGGGRYDNLIEVFGGKPTPATGFAIGIERLIPILEWKGLLPEIKLRPDVYVIPIGDDREVKKTAIEITQGLREATVRADIELTGRKLRKALDYAGKLGVPYVVLVGKKDLEAGKVTLRDMKSGEQKSIEKERAVEEILNILGV.

Belongs to the class-II aminoacyl-tRNA synthetase family.

Its subcellular location is the cytoplasm. The enzyme catalyses tRNA(His) + L-histidine + ATP = L-histidyl-tRNA(His) + AMP + diphosphate + H(+). The polypeptide is Histidine--tRNA ligase (Thermococcus kodakarensis (strain ATCC BAA-918 / JCM 12380 / KOD1) (Pyrococcus kodakaraensis (strain KOD1))).